Consider the following 124-residue polypeptide: Small ribosomal subunit protein uS13 (124 aa).

Residues Gly-95 to Arg-124 form a disordered region.

It belongs to the universal ribosomal protein uS13 family. In terms of assembly, part of the 30S ribosomal subunit. Forms a loose heterodimer with protein S19. Forms two bridges to the 50S subunit in the 70S ribosome.

Located at the top of the head of the 30S subunit, it contacts several helices of the 16S rRNA. In the 70S ribosome it contacts the 23S rRNA (bridge B1a) and protein L5 of the 50S subunit (bridge B1b), connecting the 2 subunits; these bridges are implicated in subunit movement. Contacts the tRNAs in the A and P-sites. The protein is Small ribosomal subunit protein uS13 of Mycobacteroides abscessus (strain ATCC 19977 / DSM 44196 / CCUG 20993 / CIP 104536 / JCM 13569 / NCTC 13031 / TMC 1543 / L948) (Mycobacterium abscessus).